We begin with the raw amino-acid sequence, 46 residues long: Light-harvesting protein B-800/850 beta 1 chain (46 aa).

Over 2 to 19 the chain is Cytoplasmic; the sequence is AERSLSGLTEEEAIAVHD. Residues histidine 18 and histidine 36 each contribute to the a bacteriochlorophyll site. A helical membrane pass occupies residues 20–42; it reads QFKTTFSAFIILAAVAHVLVWVW. Over 43–46 the chain is Periplasmic; it reads KPWF.

This sequence belongs to the antenna complex beta subunit family. As to quaternary structure, the core complex is formed by different alpha and beta chains, binding bacteriochlorophyll molecules, and arranged most probably in tetrameric structures disposed around the reaction center.

Its subcellular location is the cell inner membrane. Antenna complexes are light-harvesting systems, which transfer the excitation energy to the reaction centers. The chain is Light-harvesting protein B-800/850 beta 1 chain (B1) from Magnetospirillum molischianum (Rhodospirillum molischianum).